The following is a 770-amino-acid chain: DNA topoisomerase 1 (770 aa).

The 137-residue stretch at 4 to 140 (FRIIIAEKAD…EIRRAKFSAL (137 aa)) folds into the Toprim domain. Positions 10 and 109 each coordinate Mg(2+). The region spanning 156 to 563 (NYSLADAADA…ESKKMLHEVL (408 aa)) is the Topo IA-type catalytic domain. The tract at residues 194-199 (SAGRVQ) is interaction with DNA. Y312 functions as the O-(5'-phospho-DNA)-tyrosine intermediate in the catalytic mechanism. 3 C4-type zinc fingers span residues 611 to 638 (CEDP…CPVC), 673 to 700 (CPAD…YPKC), and 719 to 744 (CPYC…NMQC).

This sequence belongs to the type IA topoisomerase family. As to quaternary structure, monomer. Requires Mg(2+) as cofactor.

It catalyses the reaction ATP-independent breakage of single-stranded DNA, followed by passage and rejoining.. Releases the supercoiling and torsional tension of DNA, which is introduced during the DNA replication and transcription, by transiently cleaving and rejoining one strand of the DNA duplex. Introduces a single-strand break via transesterification at a target site in duplex DNA. The scissile phosphodiester is attacked by the catalytic tyrosine of the enzyme, resulting in the formation of a DNA-(5'-phosphotyrosyl)-enzyme intermediate and the expulsion of a 3'-OH DNA strand. The free DNA strand then undergoes passage around the unbroken strand, thus removing DNA supercoils. Finally, in the religation step, the DNA 3'-OH attacks the covalent intermediate to expel the active-site tyrosine and restore the DNA phosphodiester backbone. The chain is DNA topoisomerase 1 from Thermoplasma acidophilum (strain ATCC 25905 / DSM 1728 / JCM 9062 / NBRC 15155 / AMRC-C165).